Consider the following 181-residue polypeptide: Probable RNA 2'-phosphotransferase (181 aa).

The protein belongs to the KptA/TPT1 family.

Its function is as follows. Removes the 2'-phosphate from RNA via an intermediate in which the phosphate is ADP-ribosylated by NAD followed by a presumed transesterification to release the RNA and generate ADP-ribose 1''-2''-cyclic phosphate (APPR&gt;P). May function as an ADP-ribosylase. This chain is Probable RNA 2'-phosphotransferase, found in Acaryochloris marina (strain MBIC 11017).